Reading from the N-terminus, the 96-residue chain is Large ribosomal subunit protein eL21 (96 aa).

It belongs to the eukaryotic ribosomal protein eL21 family.

The protein is Large ribosomal subunit protein eL21 of Methanoregula boonei (strain DSM 21154 / JCM 14090 / 6A8).